The sequence spans 327 residues: Lipoyl synthase (327 aa).

Residues Cys-72, Cys-77, Cys-83, Cys-98, Cys-102, Cys-105, and Ser-313 each contribute to the [4Fe-4S] cluster site. In terms of domain architecture, Radical SAM core spans 83 to 302 (CWSHGTATIM…RKVGLEKGFL (220 aa)).

This sequence belongs to the radical SAM superfamily. Lipoyl synthase family. [4Fe-4S] cluster serves as cofactor.

Its subcellular location is the cytoplasm. It carries out the reaction [[Fe-S] cluster scaffold protein carrying a second [4Fe-4S](2+) cluster] + N(6)-octanoyl-L-lysyl-[protein] + 2 oxidized [2Fe-2S]-[ferredoxin] + 2 S-adenosyl-L-methionine + 4 H(+) = [[Fe-S] cluster scaffold protein] + N(6)-[(R)-dihydrolipoyl]-L-lysyl-[protein] + 4 Fe(3+) + 2 hydrogen sulfide + 2 5'-deoxyadenosine + 2 L-methionine + 2 reduced [2Fe-2S]-[ferredoxin]. It functions in the pathway protein modification; protein lipoylation via endogenous pathway; protein N(6)-(lipoyl)lysine from octanoyl-[acyl-carrier-protein]: step 2/2. Functionally, catalyzes the radical-mediated insertion of two sulfur atoms into the C-6 and C-8 positions of the octanoyl moiety bound to the lipoyl domains of lipoate-dependent enzymes, thereby converting the octanoylated domains into lipoylated derivatives. The polypeptide is Lipoyl synthase (Francisella tularensis subsp. mediasiatica (strain FSC147)).